Consider the following 807-residue polypeptide: Glycerol-3-phosphate acyltransferase (807 aa).

An HXXXXD motif motif is present at residues 308–313 (CHRSHM).

It belongs to the GPAT/DAPAT family.

It is found in the cell inner membrane. It carries out the reaction sn-glycerol 3-phosphate + an acyl-CoA = a 1-acyl-sn-glycero-3-phosphate + CoA. The protein operates within phospholipid metabolism; CDP-diacylglycerol biosynthesis; CDP-diacylglycerol from sn-glycerol 3-phosphate: step 1/3. In Shewanella pealeana (strain ATCC 700345 / ANG-SQ1), this protein is Glycerol-3-phosphate acyltransferase.